The following is a 605-amino-acid chain: Apoptosis-inducing factor 3 (605 aa).

Residues valine 18–leucine 29 are compositionally biased toward basic and acidic residues. The tract at residues valine 18–glycine 44 is disordered. Positions alanine 70–isoleucine 165 constitute a Rieske domain. Residues cysteine 109, histidine 111, cysteine 128, and histidine 131 each contribute to the [2Fe-2S] cluster site. FAD contacts are provided by residues glycine 201 to alanine 205, arginine 235, lysine 240, valine 270, aspartate 467, and tryptophan 514.

The protein belongs to the FAD-dependent oxidoreductase family.

It is found in the mitochondrion. Functionally, induces apoptosis through a caspase dependent pathway. Reduces mitochondrial membrane potential. The sequence is that of Apoptosis-inducing factor 3 (Aifm3) from Mus musculus (Mouse).